The sequence spans 527 residues: Cytochrome b5 reductase 4 (527 aa).

The segment at 1–24 (MLNVPSQAFPAAGSQQRVAPAGQS) is disordered. The Cytochrome b5 heme-binding domain occupies 56–132 (LIEVTEDELK…LKECLVGRMA (77 aa)). 2 residues coordinate heme: H91 and H114. The interval 138-171 (ALQAHTEKTESTHLNGLSAPPSLRPEPLSAPLPA) is disordered. Residues 173 to 264 (DHRPRYDWFQ…SVKEKWTQLG (92 aa)) form the CS domain. An FAD-binding FR-type domain is found at 281–392 (LFYRECVLLS…GGPEGSFTLR (112 aa)). FAD is bound by residues 372–387 (ANLP…GPEG) and 399–431 (HLYM…KMKL).

The protein belongs to the flavoprotein pyridine nucleotide cytochrome reductase family. Requires FAD as cofactor.

It localises to the endoplasmic reticulum. It catalyses the reaction 2 Fe(III)-[cytochrome b5] + NADH = 2 Fe(II)-[cytochrome b5] + NAD(+) + H(+). NADH-cytochrome b5 reductase involved in endoplasmic reticulum stress response pathway. This chain is Cytochrome b5 reductase 4 (cyb5r4), found in Danio rerio (Zebrafish).